The chain runs to 497 residues: MTGSEIFLASKRAAITYDTDPATGEPRAWLAPGGTGNVVAEQAGVLNISWIASADSEDDRRASALNPDGVTMELHSGREILVRLIRHDPAVFRNVQNFMTANLMWAANNYGWDRWTQPSFGSDAREGWADFGRFTRDFADAILKSSAQSADPVYLVHDYQLVGVPALLREQRPDAPILLFVHIPWPSADYWRILPKEIRTGILHGMLPATTIGFFADRWCRNFLESVADLLPDARIDREAMTVEWRGHRTRLRTMPLGYSPLTLDGRNPQLPEGIEEWADGHRLVVHSGRTDPIKNAERAVRAFVLAARGGGLEKTRMLVRMNPNRLYVPANADYVHRVETAVAEANAELGSDTVRIDNDNDVNHTIACFRRADLLIFNSTVDGQNLSTFEAPLVNERDADVILSETCGAAEVLGEYCRSVNPFDLVEQAEAISAALAAGPRQRAEAAARRRDAARPWTLEAWVQAQLDGLAADHAARTATAERFDTAPAVSTRADL.

Aspartate 158 contacts GDP-valienol. A validamine 7-phosphate-binding site is contributed by histidine 182. Residues arginine 290, lysine 295, arginine 321, 325 to 326 (NR), 361 to 362 (ND), and threonine 366 each bind GDP-valienol. Residue 383-386 (DGQN) participates in validamine 7-phosphate binding. GDP-valienol contacts are provided by residues 387–388 (LS) and glutamate 391.

Belongs to the glycosyltransferase 20 family. In terms of assembly, homodimer.

It carries out the reaction validamine 7-phosphate + GDP-valienol = validoxylamine A 7'-phosphate + GDP + H(+). In terms of biological role, involved in the biosynthesis of the antifungal agent validamycin A. Catalyzes the condensation between GDP-valienol and validamine 7-phosphate via a nonglycosidic C-N bond formation to yield validoxylamine A 7'-phosphate. The sequence is that of Validamine 7-phosphate valienyltransferase from Streptomyces hygroscopicus subsp. limoneus.